We begin with the raw amino-acid sequence, 434 residues long: Pancreatic lipase-related protein 2 (434 aa).

Residues cysteine 4 and cysteine 10 are joined by a disulfide bond. Residues 76–88 (IHGFTDSGENSWL) form a required for galactolipase activity region. Cysteines 92 and 103 form a disulfide. Serine 154 acts as the Nucleophile in catalysis. The Charge relay system role is filled by aspartate 178. Residues glutamate 189, arginine 192, aspartate 194, and aspartate 197 each contribute to the Ca(2+) site. Cysteine 239 and cysteine 245 are disulfide-bonded. A required for galactolipase activity region spans residues 240 to 244 (KTGIS). Catalysis depends on histidine 247, which acts as the Charge relay system. Intrachain disulfides connect cysteine 269/cysteine 280 and cysteine 283/cysteine 288. A glycan (N-linked (GlcNAc...) asparagine) is linked at asparagine 318. The PLAT domain occupies 322 to 434 (WRYKVTVTLS…ENVEQTLSPC (113 aa)). Cysteines 418 and 434 form a disulfide.

This sequence belongs to the AB hydrolase superfamily. Lipase family. As to expression, pancreas.

Its subcellular location is the secreted. It is found in the zymogen granule membrane. The protein resides in the cell projection. The protein localises to the neuron projection. It carries out the reaction a triacylglycerol + H2O = a diacylglycerol + a fatty acid + H(+). The catalysed reaction is a 1,2-diacyl-3-O-(beta-D-galactosyl)-sn-glycerol + 2 H2O = 3-beta-D-galactosyl-sn-glycerol + 2 a fatty acid + 2 H(+). The enzyme catalyses 1,2,3-tri-(9Z-octadecenoyl)-glycerol + H2O = di-(9Z)-octadecenoylglycerol + (9Z)-octadecenoate + H(+). It catalyses the reaction di-(9Z)-octadecenoylglycerol + H2O = (9Z-octadecenoyl)-glycerol + (9Z)-octadecenoate + H(+). It carries out the reaction (9Z-octadecenoyl)-glycerol + H2O = glycerol + (9Z)-octadecenoate + H(+). The catalysed reaction is 1-(9Z-octadecenoyl)-glycerol + H2O = glycerol + (9Z)-octadecenoate + H(+). The enzyme catalyses 1,2,3-tripropanoylglycerol + H2O = dipropanoylglycerol + propanoate + H(+). It catalyses the reaction 1,2,3-tributanoylglycerol + H2O = dibutanoylglycerol + butanoate + H(+). It carries out the reaction 1,2,3-trioctanoylglycerol + H2O = dioctanoylglycerol + octanoate + H(+). The catalysed reaction is 1,2-didecanoylglycerol + H2O = decanoylglycerol + decanoate + H(+). The enzyme catalyses long chain 1,2-diacyl-3-O-beta-D-galactosyl-sn-glycerol + H2O = long chain acyl-3-O-beta-D-galactosyl-sn-glycerol + a fatty acid + H(+). It catalyses the reaction 1,2-dioctanoyl-3-O-beta-D-galactosyl-sn-glycerol + H2O = octanoyl-3-(beta-D-galactosyl)-sn-glycerol + octanoate + H(+). It carries out the reaction 1,2-didodecanoyl-3-beta-D-galactosyl-sn-glycerol + H2O = dodecanoyl-3-beta-D-galactosyl-sn-glycerol + dodecanoate + H(+). The catalysed reaction is 1-beta-D-galactosyl-2,3-didodecanoyl-sn-glycerol + H2O = 1-beta-D-galactosyl-dodecanoyl-sn-glycerol + dodecanoate + H(+). The enzyme catalyses a 1,2-diacyl-3-O-[alpha-D-galactosyl-(1-&gt;6)-beta-D-galactosyl]-sn-glycerol + H2O = acyl-3-O-[alpha-D-galactosyl-(1-&gt;6)-beta-D-galactosyl]-sn-glycerol + a fatty acid + H(+). It catalyses the reaction long chain 1,2-diacyl-3-O-[alpha-D-galactosyl-(1-&gt;6)-beta-D-galactosyl]-sn-glycerol + H2O = long chain acyl-3-O-[alpha-D-galactosyl-(1-&gt;6)-beta-D-galactosyl]-sn-glycerol + a fatty acid + H(+). It carries out the reaction 1,2-dioctanoyl-3-O-[alpha-D-galactosyl-(1-&gt;6)-beta-D-galactosyl]-sn-glycerol + H2O = octanoyl-3-O-[alpha-D-galactosyl-(1-&gt;6)-beta-D-galactosyl]-sn-glycerol + octanoate + H(+). The catalysed reaction is 1,2-didodecanoyl-3-O-[alpha-D-galactosyl-(1-&gt;6)-beta-D-galactosyl]-sn-glycerol + H2O = dodecanoyl-3-O-[alpha-D-galactosyl-(1-&gt;6)-beta-D-galactosyl]-sn-glycerol + dodecanoate + H(+). The enzyme catalyses a 1,2-diacyl-sn-glycero-3-phosphocholine + H2O = a monoacyl-sn-glycero-3-phosphocholine + a fatty acid + H(+). The protein operates within glycerolipid metabolism; triacylglycerol degradation. Its pathway is glycolipid metabolism. With respect to regulation, CLPS stimulates triacylglycerol lipase activity. Not inhibited by bile salts. Its function is as follows. Lipase that primarily hydrolyzes triglycerides and galactosylglycerides. In neonates, may play a major role in pancreatic digestion of dietary fats such as milk fat globules enriched in long-chain triglycerides. Hydrolyzes short-, medium- and long-chain fatty acyls in triglycerides without apparent positional specificity. Can completely deacylate triacylglycerols. When the liver matures and bile salt synthesis increases, likely functions mainly as a galactolipase and monoacylglycerol lipase. Hydrolyzes monogalactosyldiglycerols (MGDG) and digalactosyldiacylglycerols (DGDG) present in a plant-based diet, releasing long-chain polyunsaturated fatty acids. Hydrolyzes medium- and long-chain fatty acyls in galactolipids. May act together with LIPF to hydrolyze partially digested triglycerides. Hydrolyzes long-chain monoglycerides with high efficiency. In cytotoxic T cells, contributes to perforin-dependent cell lysis, but is unlikely to mediate direct cytotoxicity. Also has low phospholipase activity. In neurons, required for the localization of the phospholipid 1-oleoyl-2-palmitoyl-PC (OPPC) to neurite tips through acyl chain remodeling of membrane phospholipids. The resulting OPPC-rich lipid membrane domain recruits the t-SNARE protein STX4 by selectively interacting with the STX4 transmembrane domain and this promotes surface expression of the dopamine transporter SLC6A3/DAT at neurite tips by facilitating fusion of SLC6A3-containing transport vesicles with the plasma membrane. This is Pancreatic lipase-related protein 2 from Cavia porcellus (Guinea pig).